A 267-amino-acid polypeptide reads, in one-letter code: GTP cyclohydrolase FolE2 (267 aa).

The protein belongs to the GTP cyclohydrolase IV family.

It catalyses the reaction GTP + H2O = 7,8-dihydroneopterin 3'-triphosphate + formate + H(+). The protein operates within cofactor biosynthesis; 7,8-dihydroneopterin triphosphate biosynthesis; 7,8-dihydroneopterin triphosphate from GTP: step 1/1. Its function is as follows. Converts GTP to 7,8-dihydroneopterin triphosphate. The sequence is that of GTP cyclohydrolase FolE2 from Cupriavidus necator (strain ATCC 17699 / DSM 428 / KCTC 22496 / NCIMB 10442 / H16 / Stanier 337) (Ralstonia eutropha).